We begin with the raw amino-acid sequence, 212 residues long: Translation initiation factor IF-3 (212 aa).

The disordered stretch occupies residues 168 to 212 (MAPKAPASPKKDKADRPEGDAGDTDMAAPAPAPAAAPETESAPSA). Residues 176-186 (PKKDKADRPEG) show a composition bias toward basic and acidic residues. Residues 194-212 (AAPAPAPAAAPETESAPSA) show a composition bias toward low complexity.

The protein belongs to the IF-3 family. As to quaternary structure, monomer.

The protein localises to the cytoplasm. IF-3 binds to the 30S ribosomal subunit and shifts the equilibrium between 70S ribosomes and their 50S and 30S subunits in favor of the free subunits, thus enhancing the availability of 30S subunits on which protein synthesis initiation begins. In Deinococcus radiodurans (strain ATCC 13939 / DSM 20539 / JCM 16871 / CCUG 27074 / LMG 4051 / NBRC 15346 / NCIMB 9279 / VKM B-1422 / R1), this protein is Translation initiation factor IF-3.